Consider the following 68-residue polypeptide: uncharacterized protein (68 aa).

2 helical membrane-spanning segments follow: residues 1 to 21 and 28 to 48; these read MLFI…YFLP and VHFS…LSSV.

The protein resides in the cell membrane. This is an uncharacterized protein from Haemophilus influenzae (strain ATCC 51907 / DSM 11121 / KW20 / Rd).